Here is a 166-residue protein sequence, read N- to C-terminus: Transcription antitermination protein NusB (166 aa).

The span at 1–18 (MISDESDRFNPRDPKPAD) shows a compositional bias: basic and acidic residues. Residues 1-30 (MISDESDRFNPRDPKPADAGKPSKSAKRRE) are disordered.

The protein belongs to the NusB family.

Involved in transcription antitermination. Required for transcription of ribosomal RNA (rRNA) genes. Binds specifically to the boxA antiterminator sequence of the ribosomal RNA (rrn) operons. The polypeptide is Transcription antitermination protein NusB (Pseudomonas fluorescens (strain Pf0-1)).